The following is a 230-amino-acid chain: UPF0173 metal-dependent hydrolase OEOE_1287 (230 aa).

It belongs to the UPF0173 family.

This is UPF0173 metal-dependent hydrolase OEOE_1287 from Oenococcus oeni (strain ATCC BAA-331 / PSU-1).